Here is a 143-residue protein sequence, read N- to C-terminus: 3-hydroxyacyl-[acyl-carrier-protein] dehydratase FabZ (143 aa).

Residue His-48 is part of the active site.

The protein belongs to the thioester dehydratase family. FabZ subfamily.

Its subcellular location is the cytoplasm. The enzyme catalyses a (3R)-hydroxyacyl-[ACP] = a (2E)-enoyl-[ACP] + H2O. Its function is as follows. Involved in unsaturated fatty acids biosynthesis. Catalyzes the dehydration of short chain beta-hydroxyacyl-ACPs and long chain saturated and unsaturated beta-hydroxyacyl-ACPs. The chain is 3-hydroxyacyl-[acyl-carrier-protein] dehydratase FabZ from Roseiflexus sp. (strain RS-1).